We begin with the raw amino-acid sequence, 237 residues long: Uridylate kinase (237 aa).

Residue 13–16 (KLSG) coordinates ATP. G53 is a UMP binding site. The ATP site is built by G54 and R58. UMP-binding positions include D73 and 134-141 (AGLPYFST). N162, Y168, and D171 together coordinate ATP.

It belongs to the UMP kinase family. In terms of assembly, homohexamer.

The protein localises to the cytoplasm. It catalyses the reaction UMP + ATP = UDP + ADP. It participates in pyrimidine metabolism; CTP biosynthesis via de novo pathway; UDP from UMP (UMPK route): step 1/1. With respect to regulation, inhibited by UTP. In terms of biological role, catalyzes the reversible phosphorylation of UMP to UDP. This chain is Uridylate kinase, found in Leifsonia xyli subsp. xyli (strain CTCB07).